The following is a 368-amino-acid chain: Carbamoyl phosphate synthase small chain (368 aa).

A CPSase region spans residues 1–178 (MKAVLGLEDG…GAAGAWKGSG (178 aa)). The L-glutamine site is built by S45, G230, and G232. The region spanning 182-368 (HAVVVDLGIK…KVVKVLGGGL (187 aa)) is the Glutamine amidotransferase type-1 domain. The Nucleophile role is filled by C257. Residues F258, Q261, N299, G301, and Y302 each coordinate L-glutamine. Catalysis depends on residues H342 and E344.

The protein belongs to the CarA family. In terms of assembly, composed of two chains; the small (or glutamine) chain promotes the hydrolysis of glutamine to ammonia, which is used by the large (or ammonia) chain to synthesize carbamoyl phosphate. Tetramer of heterodimers (alpha,beta)4.

It catalyses the reaction hydrogencarbonate + L-glutamine + 2 ATP + H2O = carbamoyl phosphate + L-glutamate + 2 ADP + phosphate + 2 H(+). It carries out the reaction L-glutamine + H2O = L-glutamate + NH4(+). It participates in amino-acid biosynthesis; L-arginine biosynthesis; carbamoyl phosphate from bicarbonate: step 1/1. It functions in the pathway pyrimidine metabolism; UMP biosynthesis via de novo pathway; (S)-dihydroorotate from bicarbonate: step 1/3. Small subunit of the glutamine-dependent carbamoyl phosphate synthetase (CPSase). CPSase catalyzes the formation of carbamoyl phosphate from the ammonia moiety of glutamine, carbonate, and phosphate donated by ATP, constituting the first step of 2 biosynthetic pathways, one leading to arginine and/or urea and the other to pyrimidine nucleotides. The small subunit (glutamine amidotransferase) binds and cleaves glutamine to supply the large subunit with the substrate ammonia. The chain is Carbamoyl phosphate synthase small chain from Methanosarcina mazei (strain ATCC BAA-159 / DSM 3647 / Goe1 / Go1 / JCM 11833 / OCM 88) (Methanosarcina frisia).